The following is a 186-amino-acid chain: Ribosome maturation factor RimP (186 aa).

It belongs to the RimP family.

The protein localises to the cytoplasm. Required for maturation of 30S ribosomal subunits. This is Ribosome maturation factor RimP from Rhizorhabdus wittichii (strain DSM 6014 / CCUG 31198 / JCM 15750 / NBRC 105917 / EY 4224 / RW1) (Sphingomonas wittichii).